The chain runs to 157 residues: MGVIEFLLALAQDMILAAIPAVGFAMVFNVPVQALRWCALLGSIGHGSRMILMTSGLNIEWSTFMASMLVGTIGIQWSRWYLAHPKVFTVAAVIPMFPGISAYTAMISAVKISQLGYSEPLMITLLTNFLTASSIVGALSVDLSIPGLWLYRKRPRV.

4 helical membrane passes run 15–35 (ILAA…VQAL), 50–70 (MILM…SMLV), 87–107 (VFTV…TAMI), and 121–141 (LMIT…ALSV).

This sequence belongs to the ThrE exporter (TC 2.A.79) family. In terms of assembly, the transporter is composed of YjjB and YjjP.

It localises to the cell inner membrane. Involved in succinate export with YjjP. Both proteins are required for export. The chain is Probable succinate transporter subunit YjjB from Shigella dysenteriae serotype 1 (strain Sd197).